The sequence spans 455 residues: Transcriptional regulatory protein FlbD (455 aa).

The 113-residue stretch at 2–114 folds into the Response regulatory domain; that stretch reads RLLVVGKLNG…LIAAVLAAVT (113 aa). The 230-residue stretch at 120-349 folds into the Sigma-54 factor interaction domain; the sequence is MVVRDPAMEQ…LENAMHRAVL (230 aa). ATP-binding positions include 148–155 and 211–220; these read GESGSGKE and ADGGTLLLDE. The segment at residues 416-435 is a DNA-binding region (H-T-H motif); the sequence is RTHAANILGISIRTLRNKLK.

It is found in the cytoplasm. Functionally, activation of sigma-54-dependent flagellar gene promoters and strong negative autoregulatory effects on its own promoter. The synthesis and function of FlbD in C.crescentus is controlled by an internal cell-cycle clock. This Caulobacter vibrioides (strain ATCC 19089 / CIP 103742 / CB 15) (Caulobacter crescentus) protein is Transcriptional regulatory protein FlbD (flbD).